The chain runs to 593 residues: Efflux pump FUB11 (593 aa).

The interval 1–45 (MAIDPQPSSPSLSSETIANDTIGNDNNVNEPSVEPKTQEHQHTVP) is disordered. The segment covering 9–30 (SPSLSSETIANDTIGNDNNVNE) has biased composition (polar residues). N19 carries an N-linked (GlcNAc...) asparagine glycan. The next 12 helical transmembrane spans lie at 98-118 (WAFV…SSAY), 135-155 (VATL…LVWA), 167-187 (FFFT…AGSI), 195-215 (FLTG…IADM), 227-247 (MFSG…GFLG), 254-274 (WLHG…TVFI), 337-357 (IYIS…PIVF), 367-387 (IGGL…ISFA), 410-430 (LPPA…FAWT), 438-458 (IVPI…FMAL), 468-488 (IFAA…GAAF), and 503-523 (WASS…FLFY). Positions 570-593 (THNSHASAAHSHGHRRSLSYTRSA) are disordered.

Belongs to the major facilitator superfamily. DHA1 family. Polyamines/proton antiporter (TC 2.A.1.2.16) subfamily.

It is found in the cell membrane. Functionally, efflux pump involved in export of fusaric acid, a mycotoxin with low to moderate toxicity to animals and humans, but with high phytotoxic properties. Constitutes a self-protecting mechanism of the fungus against critical levels of FSA within the cell. This chain is Efflux pump FUB11, found in Gibberella moniliformis (strain M3125 / FGSC 7600) (Maize ear and stalk rot fungus).